We begin with the raw amino-acid sequence, 115 residues long: NADH-ubiquinone oxidoreductase chain 3 (115 aa).

The next 3 membrane-spanning stretches (helical) occupy residues 3–23 (FVLA…LTFW), 55–75 (FFLV…LLPL), and 84–104 (LPLM…GLTY).

Belongs to the complex I subunit 3 family. In terms of assembly, core subunit of respiratory chain NADH dehydrogenase (Complex I) which is composed of 45 different subunits. Interacts with TMEM186. Interacts with TMEM242.

The protein resides in the mitochondrion inner membrane. It catalyses the reaction a ubiquinone + NADH + 5 H(+)(in) = a ubiquinol + NAD(+) + 4 H(+)(out). Its function is as follows. Core subunit of the mitochondrial membrane respiratory chain NADH dehydrogenase (Complex I) which catalyzes electron transfer from NADH through the respiratory chain, using ubiquinone as an electron acceptor. Essential for the catalytic activity of complex I. This is NADH-ubiquinone oxidoreductase chain 3 from Pongo pygmaeus (Bornean orangutan).